We begin with the raw amino-acid sequence, 595 residues long: MEAYKEKIKEKLSVVPFEPGCYLMKDRNNQVIYVGKAKRLRNRLRSYFTGAHDAKTTRLVGEIRNFEFIVTDSETESLLLELNLIKQYQPRYNILLKDDKSYPFIKITKEKYPRLLVTRTVKKGSGKYFGPYPNAYAAVETKKLLDRIYPFRKCDKMPNKLCLYYHIGQCLGPCVYDVDQKEYDDMTQEVSDFLNGEDKTIIKNLESRMQAASENLEFEQAKEYRDLIQNIHNLTKKQNIMSADNTARDVFGYYISKGWMCIQVFFVRNGNMIQRDTTMIPLQQTPEEEFYTFIGQFYRLNQHLLPKEVHVPKNLDKKMIESVVDTKILQPVRGQKKDLVNMANHNAEVSLQNKFELIARDESRTVKAIEELGEQMGIQTPIRIEAFDNSNIQGVDAVSAMVTFVDGKPDKKGYRKYKIKTVEGPDDYKSMQEVIRRRYTRVLNDGLPLPDLIIVDGGKGQMSVAIDVLENELGLDIPVAGLRKNDKHRTSELLYGPAAEVVPLKKNSQAFYLLQRIQDEVHRFAITFHRKTRQKHSFTSALDEIEGIGPKRKTTLLRTFGSIKKMREATLEDLKEAGLPEKVAESLQKELNKED.

A GIY-YIG domain is found at 17-94; sequence FEPGCYLMKD…IKQYQPRYNI (78 aa). Residues 199–234 enclose the UVR domain; that stretch reads KTIIKNLESRMQAASENLEFEQAKEYRDLIQNIHNL.

It belongs to the UvrC family. As to quaternary structure, interacts with UvrB in an incision complex.

It localises to the cytoplasm. In terms of biological role, the UvrABC repair system catalyzes the recognition and processing of DNA lesions. UvrC both incises the 5' and 3' sides of the lesion. The N-terminal half is responsible for the 3' incision and the C-terminal half is responsible for the 5' incision. In Staphylococcus carnosus (strain TM300), this protein is UvrABC system protein C.